Here is a 141-residue protein sequence, read N- to C-terminus: Hemoglobin subunit alpha-1 (141 aa).

Residues 1 to 141 (VLSEGNKKAI…VTYQLSSLYR (141 aa)) form the Globin domain. Position 59 (His-59) interacts with O2. Residue His-88 participates in heme b binding.

The protein belongs to the globin family. As to quaternary structure, heterotetramer of two alpha chains and two beta chains. Red blood cells.

Its function is as follows. Involved in oxygen transport from the lung to the various peripheral tissues. The chain is Hemoglobin subunit alpha-1 from Torpedo marmorata (Marbled electric ray).